A 710-amino-acid polypeptide reads, in one-letter code: Pentatricopeptide repeat-containing protein At1g02060, chloroplastic (710 aa).

A chloroplast-targeting transit peptide spans 1–21 (MVSSVPKLHALFVSKSQPVLR). PPR repeat units lie at residues 137-171 (QDRY…GISP), 172-202 (SVLT…MRRT), 208-242 (DSYT…HCNP), 243-277 (DVVT…ATDV), 280-314 (NVVS…GLKP), 315-351 (NAVT…TFAP), 352-386 (DACT…KLHP), 387-421 (DSAS…EVLL), 429-459 (LAAA…LMKR), 463-497 (DPPS…EFVP), 498-532 (DLET…SYLP), and 533-567 (VATT…RIRQ).

The protein belongs to the PPR family. P subfamily.

It is found in the plastid. Its subcellular location is the chloroplast. This is Pentatricopeptide repeat-containing protein At1g02060, chloroplastic from Arabidopsis thaliana (Mouse-ear cress).